The sequence spans 215 residues: Octanoyltransferase (215 aa).

A BPL/LPL catalytic domain is found at 42–215; it reads QNTPDEIWLL…AEKLKARLKQ (174 aa). Substrate contacts are provided by residues 81–88, 148–150, and 161–163; these read RGGQITYH, ALG, and GLA. Residue cysteine 179 is the Acyl-thioester intermediate of the active site.

It belongs to the LipB family.

The protein resides in the cytoplasm. It catalyses the reaction octanoyl-[ACP] + L-lysyl-[protein] = N(6)-octanoyl-L-lysyl-[protein] + holo-[ACP] + H(+). It functions in the pathway protein modification; protein lipoylation via endogenous pathway; protein N(6)-(lipoyl)lysine from octanoyl-[acyl-carrier-protein]: step 1/2. In terms of biological role, catalyzes the transfer of endogenously produced octanoic acid from octanoyl-acyl-carrier-protein onto the lipoyl domains of lipoate-dependent enzymes. Lipoyl-ACP can also act as a substrate although octanoyl-ACP is likely to be the physiological substrate. This is Octanoyltransferase from Nitrosospira multiformis (strain ATCC 25196 / NCIMB 11849 / C 71).